Reading from the N-terminus, the 631-residue chain is Mitochondrial Rho GTPase (631 aa).

At 1–605 (MRAGRVRPLR…TQADLKSSTF (605 aa)) the chain is on the cytoplasmic side. In terms of domain architecture, Miro 1 spans 15–181 (KKDVRILLVG…FYYAQKAVLH (167 aa)). GTP-binding residues include arginine 27, glycine 29, lysine 30, threonine 31, and serine 32. Threonine 31 provides a ligand contact to Mg(2+). Residue aspartate 70 participates in Mg(2+) binding. Residue serine 72 coordinates GTP. N6-acetyllysine is present on lysine 105. Residues asparagine 131, lysine 132, aspartate 134, alanine 162, and lysine 163 each contribute to the GTP site. Lysine 166 is covalently cross-linked (Glycyl lysine isopeptide (Lys-Gly) (interchain with G-Cter in ubiquitin)). Residues 197 to 232 (ACIKALTRIFKISDQDNDGTLNDAELNFFQRICFNT) enclose the EF-hand 1 domain. The Ca(2+) site is built by aspartate 210, aspartate 212, aspartate 214, threonine 216, and glutamate 221. Residue lysine 248 forms a Glycyl lysine isopeptide (Lys-Gly) (interchain with G-Cter in ubiquitin) linkage. An EF-hand 2 domain is found at 317 to 352 (HAYLFLQSTFDKHDLDRDCALSPDELKDLFQVFPYI). Ca(2+) is bound by residues aspartate 330, aspartate 332, aspartate 334, alanine 336, and glutamate 341. A Miro 2 domain is found at 429 to 592 (RNVFRCNVIG…FVKLTTMAMY (164 aa)). Residues glycine 441, cysteine 442, glycine 443, lysine 444, threonine 445, glycine 446, lysine 460, lysine 541, aspartate 543, threonine 571, and cysteine 572 each coordinate GTP. Glycine 441 contributes to the Mg(2+) binding site. Residue lysine 585 forms a Glycyl lysine isopeptide (Lys-Gly) (interchain with G-Cter in ubiquitin) linkage. The helical; Anchor for type IV membrane protein transmembrane segment at 606–628 (WLRASFGATVFAVVGFAMYRALL) threads the bilayer. Residues 629–631 (KQR) lie on the Mitochondrial intermembrane side of the membrane.

This sequence belongs to the mitochondrial Rho GTPase family. Homodimer. Interacts with the kinesin-binding proteins TRAK1/OIP106 and TRAK2/GRIF1, forming a link between mitochondria and the trafficking apparatus of the microtubules. Interacts with RAP1GDS1. Interacts with ARMCX1. Found in a complex with KIF5B, OGT, RHOT2 and TRAK1. In terms of processing, ubiquitinated by PRKN during mitophagy, leading to its degradation and enhancement of mitophagy. Deubiquitinated by USP30. Acetylation on Lys-105 decreases sensitivity of mitochondrial transport to elevated Ca(2+) levels, increases mitochondrial transport and promotes axon growth. Deacetylated by HDAC6 which blocks mitochondrial transport and mediates axon growth inhibition.

Its subcellular location is the mitochondrion outer membrane. It catalyses the reaction GTP + H2O = GDP + phosphate + H(+). The enzyme catalyses ATP + H2O = ADP + phosphate + H(+). It carries out the reaction UTP + H2O = UDP + phosphate + H(+). Its function is as follows. Atypical mitochondrial nucleoside-triphosphatase (NTPase) involved in mitochondrial trafficking. Probably involved in control of anterograde transport of mitochondria and their subcellular distribution. Promotes mitochondrial fission during high calcium conditions. Can hydrolyze GTP, ATP and UTP. The chain is Mitochondrial Rho GTPase from Rattus norvegicus (Rat).